A 296-amino-acid polypeptide reads, in one-letter code: Myozenin-1 (296 aa).

Ser82 carries the post-translational modification Phosphoserine. Gly residues-rich tracts occupy residues 105-117 (FSYG…GQAG) and 134-170 (SGFG…QAGG). The disordered stretch occupies residues 105–172 (FSYGKGSSGG…GSGDQAGGDG (68 aa)).

This sequence belongs to the myozenin family. In terms of assembly, interacts with ACTN2, ACTN3, FLNA, FLNB, FLNC, LDB3, PPP3CA and TCAP. Interacts via its C-terminal region with MYOT. Expressed primarily in skeletal muscle and specifically enriched in the gastrocnemius, which is composed predominantly of fast-twitch muscle fibers. Detected at lower levels in heart.

The protein localises to the nucleus. Its subcellular location is the cell projection. It is found in the pseudopodium. Its function is as follows. Myozenins may serve as intracellular binding proteins involved in linking Z-disk proteins such as alpha-actinin, gamma-filamin, TCAP/telethonin, LDB3/ZASP and localizing calcineurin signaling to the sarcomere. Plays an important role in the modulation of calcineurin signaling. May play a role in myofibrillogenesis. This Mus musculus (Mouse) protein is Myozenin-1.